The primary structure comprises 575 residues: FAD-dependent monooxygenase rstn6 (575 aa).

A signal peptide spans 1–17 (MYDVIVIGAGWCGLVAA). Residue isoleucine 106 coordinates FAD. N-linked (GlcNAc...) asparagine glycans are attached at residues asparagine 239 and asparagine 295.

The protein belongs to the FAD-binding monooxygenase family. FAD serves as cofactor.

It functions in the pathway antifungal biosynthesis. In terms of biological role, FAD-dependent monooxygenase; part of the gene cluster that mediates the biosynthesis of the tetrahydropyranyl antifungal agent restricticin that acts as an inhibitor of CYP51 and blocks the ergosterol biosynthesis. The highly reducing polyketide synthase rstn3, the short chain dehydrogenase rstn4, the cyclase rstn5, the FAD-dependent monooxygenase rstn6 and the enoylreductase rstn7 are required to generate the first stable intermediate desmethylrestrictinol. Rstn3 with rstn7 biosynthesize the first polyketide chain intermediate that is reduced by rstn4, followed by epoxidation by rstn6 before 6-endo cyclization via epoxide opening by rstn5 leads to desmethylrestrictinol. The methyltransferase rstn1 then catalyzes the C4 O-methylation of desmethylrestrictinol to produce restrictinol, and the nonribosomal peptide synthetase rstn8 catalyzes the C3 esterification of restrictinol with glycine that leads to restricticin. The chain is FAD-dependent monooxygenase rstn6 from Aspergillus nomiae NRRL (strain ATCC 15546 / NRRL 13137 / CBS 260.88 / M93).